Consider the following 247-residue polypeptide: uncharacterized protein (247 aa).

This is an uncharacterized protein from Archaeoglobus fulgidus (strain ATCC 49558 / DSM 4304 / JCM 9628 / NBRC 100126 / VC-16).